A 471-amino-acid polypeptide reads, in one-letter code: Ribulose bisphosphate carboxylase large chain (471 aa).

The residue at position 5 (K5) is an N6,N6,N6-trimethyllysine. Positions 114 and 164 each coordinate substrate. Catalysis depends on K166, which acts as the Proton acceptor. K168 lines the substrate pocket. Mg(2+) is bound by residues K192, D194, and E195. N6-carboxylysine is present on K192. Catalysis depends on H285, which acts as the Proton acceptor. Residues R286, H318, and S370 each contribute to the substrate site.

Belongs to the RuBisCO large chain family. Type I subfamily. Heterohexadecamer of 8 large chains and 8 small chains; disulfide-linked. The disulfide link is formed within the large subunit homodimers. Mg(2+) serves as cofactor. Post-translationally, the disulfide bond which can form in the large chain dimeric partners within the hexadecamer appears to be associated with oxidative stress and protein turnover.

It localises to the plastid. The protein resides in the chloroplast. It carries out the reaction 2 (2R)-3-phosphoglycerate + 2 H(+) = D-ribulose 1,5-bisphosphate + CO2 + H2O. The catalysed reaction is D-ribulose 1,5-bisphosphate + O2 = 2-phosphoglycolate + (2R)-3-phosphoglycerate + 2 H(+). Functionally, ruBisCO catalyzes two reactions: the carboxylation of D-ribulose 1,5-bisphosphate, the primary event in carbon dioxide fixation, as well as the oxidative fragmentation of the pentose substrate in the photorespiration process. Both reactions occur simultaneously and in competition at the same active site. This Chiococca alba (West Indian milkberry) protein is Ribulose bisphosphate carboxylase large chain.